Consider the following 1064-residue polypeptide: Bifunctional cytochrome P450/NADPH--P450 reductase ascE (1064 aa).

The segment at 1-484 is cytochrome P450; the sequence is MTELIPGPKG…LHGGAKKGSK (484 aa). Cys-411 lines the heme pocket. Residues 485 to 1064 form an NADPH-P-450 reductase region; the sequence is IDGPSSGASL…ANRYVTEIFA (580 aa). The Flavodoxin-like domain occupies 504-644; it reads MTILYGSDSG…DFERWQDDQL (141 aa). FMN contacts are provided by residues 510-514 and 588-620; these read SDSGT and VYGC…KRIA. The FAD-binding FR-type domain maps to 676–905; that stretch reads VDADEATVQS…KPALRLFHPP (230 aa).

This sequence in the N-terminal section; belongs to the cytochrome P450 family. It depends on FAD as a cofactor. FMN serves as cofactor. The cofactor is heme.

The enzyme catalyses ilicicolin A + NADPH + O2 + H(+) = ilicicolin A epoxide + NADP(+) + H2O. The protein operates within secondary metabolite biosynthesis; terpenoid biosynthesis. In terms of biological role, bifunctional cytochrome P450/NADPH--P450 reductase; part of the asc-1 gene cluster that mediates the biosynthesis both ascochlorin and ascofuranone, a strong inhibitor of cyanide-insensitive alternative oxidases and a promising drug candidate against African trypanosomiasis. The first step in the pathway is performed by the non-reducing polyketide synthase ascC that produces orsellinic acid by condensing acetyl-CoA with 3 malonyl-CoA units. Orsellinic acid is then prenylated by the prenyltransferase ascA to yield ilicicolinic acid B. Ilicicolinic acid B is further reduced to ilicicolin B by the reductase ascB. The halogenase ascD then chlorinates ilicicolin B to produce ilicicolin A which is converted to ilicicolin A epoxide by the cytochrome P450 monooxygenase ascE that catalyzes stereoselective epoxidation of the terminal double bond of the prenyl group. Ilicicolin A epoxide is the last common precursor for the biosynthesis of ascofuranone and ascochlorin. The terpene cyclase ascF produces a monocyclic terpene, and the cyclization reaction is proposed to be initiated by protonation of the terminal epoxide of ilicicolin A epoxide to generate a monocyclic tertiarycation, which is followed by a series of hydride and methyl shifts with abstraction of proton, leading to the formation of the (14S,15R,19R)-trimethylcyclohexanone ring structure of ilicicolin C, which is finally reduced to ascochlorin by the dehydrogenase ascG. On the other hand, ilicicolin A epoxide is hydroxylated by the cytochrome P450 monooxygenase ascH, and the resultant product is cyclized by the terpene cyclase ascI to ascofuranol via protonation-initiated epoxide ring opening, which facilitates the 6-endo-tet cyclization to form the tetrahy-drofuran ring. Finally, ascofuranol is oxidized into ascofuranone by ascJ. In Acremonium egyptiacum (Oospora egyptiaca), this protein is Bifunctional cytochrome P450/NADPH--P450 reductase ascE.